Reading from the N-terminus, the 474-residue chain is MDVHTNNWRYFHHGCDVMAHLVIPEDLIEGLYAEDRPKIFSCTLKVIDYQTNLVSEPVIVWARSIDHRHTVGTLTSGIALSIPLLLTNDTWHPFNIILLRFAETANHNACYVRFFYQTIFSGLIKAGAPPVEEVNHPPVELPPREDPLVNILQGRSGRQFPATEESTNDHTASQKLVIGEAASAYLNHRALERSPSLRGALAGEIFSSSGASNLSGSVPPANRQARRTALVNLVGTKDFTKDMLRLLPLTHCLSGKRFWLCMYNPEGYKNLVSCLNHLSEDELKKINPLSIIQQDTSFLTLKMNQFVDSLLEECRAANFRMQQVLGVAIRSDASNALEYVQEQFYEACFTLRCATNENSGWVKAAVATQSRKQGVWLDVISLWDQGVGSWGVSLKLPNPLPGLHTLACIQQLSCQLEGKHKYLLESVCAKDDQIAVLHSHTLNAWLLLPGGFAIKGKFTHSEKDLLHISSRYGV.

Belongs to the herpesviridae CVC1 protein family. As to quaternary structure, interacts (via C-terminus) with capsid vertex component 2/CVC2.

Its subcellular location is the virion. The protein localises to the host nucleus. Capsid vertex-specific component that plays a role during viral DNA encapsidation, assuring correct genome cleavage and presumably stabilizing capsids that contain full-length viral genomes. The polypeptide is Capsid vertex component 1 (Alcelaphine herpesvirus 1 (strain C500) (AlHV-1)).